A 511-amino-acid chain; its full sequence is Cytochrome P450 monooxygenase roqR (511 aa).

An N-terminal signal peptide occupies residues 1-23; the sequence is MSGYVLLTVQLAAVLLLVTLWRA. Residues Asn364, Asn373, and Asn383 are each glycosylated (N-linked (GlcNAc...) asparagine). A heme-binding site is contributed by Cys455.

Belongs to the cytochrome P450 family. Heme serves as cofactor.

The protein operates within alkaloid biosynthesis. In terms of biological role, cytochrome P450 monooxygenase; part of the gene cluster that mediates the biosynthesis of the mycotoxins roquefortine C and meleagrin. The first stage is catalyzed by the dipeptide synthase roqA which condenses histidine and tryptophan to produce histidyltryptophanyldiketopiperazine (HTD). HTD is then converted to roquefortine C through two possible pathways. In the first pathway, prenyltransferase roqD transforms HTD to the intermediate roquefortine D, which is in turn converted to roquefortine C by the cytochrome P450 monooxygenase roqR. In the second pathway, HTD is first converted to the intermediate dehydrohistidyltryptophanyldi-ketopiperazine (DHTD) by roqR which is then prenylated by roqD to form roquefortine C. Roquefortine C can be further transformed to meleagrin via three more reactions including oxydation to glandicolin A by roqM, which is further reduced to glandicoline B by roqO. Finally, glandicoline B is converted to meleagrin by the glandicoline B O-methyltransferase roqN. More studies identified further branching and additional metabolites produced by the roquefortine/meleagrin cluster, including roquefortine F, roquefortine L, roquefortine M, roquefortine N and neoxaline. This chain is Cytochrome P450 monooxygenase roqR, found in Penicillium rubens (strain ATCC 28089 / DSM 1075 / NRRL 1951 / Wisconsin 54-1255) (Penicillium chrysogenum).